Reading from the N-terminus, the 399-residue chain is Probable peptidoglycan glycosyltransferase FtsW (399 aa).

The next 9 helical transmembrane spans lie at 19–39, 61–81, 85–105, 114–134, 160–180, 198–218, 285–305, 314–334, and 350–370; these read PLPVLIITSVALLVTGVVMIS, ILFAGLGCATALVAVNVPVSW, SGWLLLGIGLLVLVLVLTPLG, WIPMGLFNVQVSEVAKLCLIA, VLGVASVLLVIQPDFGATVVL, FMPLIGVLAALGTILVVTQPY, LLGALVVLGLFAALVVSGLVI, MAFGACFSYGITLLIGLQAGI, and LPLVSYGGSSLMVTCIGIAVI.

Belongs to the SEDS family. FtsW subfamily.

Its subcellular location is the cell inner membrane. The catalysed reaction is [GlcNAc-(1-&gt;4)-Mur2Ac(oyl-L-Ala-gamma-D-Glu-L-Lys-D-Ala-D-Ala)](n)-di-trans,octa-cis-undecaprenyl diphosphate + beta-D-GlcNAc-(1-&gt;4)-Mur2Ac(oyl-L-Ala-gamma-D-Glu-L-Lys-D-Ala-D-Ala)-di-trans,octa-cis-undecaprenyl diphosphate = [GlcNAc-(1-&gt;4)-Mur2Ac(oyl-L-Ala-gamma-D-Glu-L-Lys-D-Ala-D-Ala)](n+1)-di-trans,octa-cis-undecaprenyl diphosphate + di-trans,octa-cis-undecaprenyl diphosphate + H(+). It functions in the pathway cell wall biogenesis; peptidoglycan biosynthesis. In terms of biological role, peptidoglycan polymerase that is essential for cell division. This chain is Probable peptidoglycan glycosyltransferase FtsW, found in Marinobacter nauticus (strain ATCC 700491 / DSM 11845 / VT8) (Marinobacter aquaeolei).